Consider the following 78-residue polypeptide: Large ribosomal subunit protein bL28 (78 aa).

The protein belongs to the bacterial ribosomal protein bL28 family.

The sequence is that of Large ribosomal subunit protein bL28 from Psychrobacter sp. (strain PRwf-1).